The sequence spans 561 residues: Putative transport protein AHA_2450 (561 aa).

5 consecutive transmembrane segments (helical) span residues 8-28, 37-57, 66-86, 90-110, and 161-181; these read LLHQ…LLLG, IGNT…GFEF, FMLF…SVFL, IHYI…TVGL, and NMGI…MLVV. RCK C-terminal domains follow at residues 206 to 291 and 293 to 376; these read SDNE…NYRN and KEVF…KIGF. 5 consecutive transmembrane segments (helical) span residues 386-406, 409-429, 450-470, 476-496, and 541-561; these read LVAF…SLVF, LEFG…MGYL, LGLA…ILDH, AVVL…GYLF, and TYAV…GFWF.

It belongs to the AAE transporter (TC 2.A.81) family. YbjL subfamily.

It localises to the cell membrane. The chain is Putative transport protein AHA_2450 from Aeromonas hydrophila subsp. hydrophila (strain ATCC 7966 / DSM 30187 / BCRC 13018 / CCUG 14551 / JCM 1027 / KCTC 2358 / NCIMB 9240 / NCTC 8049).